A 1383-amino-acid polypeptide reads, in one-letter code: DNA-directed RNA polymerase subunit beta (1383 aa).

It belongs to the RNA polymerase beta chain family. The RNAP catalytic core consists of 2 alpha, 1 beta, 1 beta' and 1 omega subunit. When a sigma factor is associated with the core the holoenzyme is formed, which can initiate transcription.

It catalyses the reaction RNA(n) + a ribonucleoside 5'-triphosphate = RNA(n+1) + diphosphate. In terms of biological role, DNA-dependent RNA polymerase catalyzes the transcription of DNA into RNA using the four ribonucleoside triphosphates as substrates. The chain is DNA-directed RNA polymerase subunit beta from Xanthomonas euvesicatoria pv. vesicatoria (strain 85-10) (Xanthomonas campestris pv. vesicatoria).